The chain runs to 354 residues: Protein C42 (354 aa).

The Nuclear localization signal signature appears at K349–K352.

Belongs to the baculoviridae C42 protein family.

It is found in the host nucleus. This chain is Protein C42, found in Orgyia pseudotsugata (Douglas-fir tussock moth).